The following is a 557-amino-acid chain: Myo-inositol transporter 2 (557 aa).

Residues 1-76 (MDFNNIPLAT…ENGEGFEAEK (76 aa)) are Cytoplasmic-facing. The tract at residues 24–69 (EMTTRPSETKKKVPFSEDMREIPSLPNEEEANATDPQANEVADENG) is disordered. The span at 30 to 44 (SETKKKVPFSEDMRE) shows a compositional bias: basic and acidic residues. A helical membrane pass occupies residues 77-97 (ISSWIWVLSAVAGISGLLFGY). At 98-99 (DT) the chain is on the extracellular side. A helical transmembrane segment spans residues 100–120 (GVISGALAVLGSDLGHVLSSG). The Cytoplasmic portion of the chain corresponds to 121–123 (QKE). Residues 124-144 (LITSATSFAALISATTSGWLA) form a helical membrane-spanning segment. The Extracellular segment spans residues 145-157 (DWVGRKRLLLCAD). The helical transmembrane segment at 158-178 (AIFVIGSVIMAASRNVAMMVV) threads the bilayer. Topologically, residues 179 to 180 (GR) are cytoplasmic. The chain crosses the membrane as a helical span at residues 181 to 201 (FIVGYGIGLTSLIVPMYITEL). Residues 202–209 (APARLRGR) lie on the Extracellular side of the membrane. A helical membrane pass occupies residues 210–230 (LVIIYVVFITGGQLIAYSLNA). Over 231–240 (AFEHVHQGWR) the chain is Cytoplasmic. The chain crosses the membrane as a helical span at residues 241-261 (IMFGIGAAPALGQLISLFWTP). At 262 to 367 (ESPRYLLRHN…IFQSVGFKNS (106 aa)) the chain is on the extracellular side. The chain crosses the membrane as a helical span at residues 368–388 (ISVSIVVGATNFVFTIVAFMF). The Cytoplasmic portion of the chain corresponds to 389 to 396 (IDRIGRRR). Residues 397–417 (ILLCTSAVMIAGLALCAIAYH) form a helical membrane-spanning segment. Over 418 to 432 (FLPADTTQNTNSGWQ) the chain is Extracellular. Residues 433–453 (YVVLASIIIFLASYASGIGNI) form a helical membrane-spanning segment. Topologically, residues 454 to 468 (PWQQAELFPMEVRAL) are cytoplasmic. The helical transmembrane segment at 469 to 489 (GAGFSTAINWVGNLIISASFL) threads the bilayer. The Extracellular segment spans residues 490–498 (TMMESITPT). A helical transmembrane segment spans residues 499–519 (GTFALFAGFCFVGLVTSYFTY). The Cytoplasmic portion of the chain corresponds to 520 to 557 (PELAGMSIENIHKLLEKGFWQAVKESTKRVRKGRIDEA).

Belongs to the major facilitator superfamily. Sugar transporter (TC 2.A.1.1) family.

Its subcellular location is the membrane. It catalyses the reaction myo-inositol(out) + H(+)(out) = myo-inositol(in) + H(+)(in). In terms of biological role, transporter for myo-inositol. The chain is Myo-inositol transporter 2 (itr2) from Schizosaccharomyces pombe (strain 972 / ATCC 24843) (Fission yeast).